Consider the following 75-residue polypeptide: Large ribosomal subunit protein bL31 (75 aa).

Zn(2+) is bound by residues C16, C18, C37, and C40.

The protein belongs to the bacterial ribosomal protein bL31 family. Type A subfamily. In terms of assembly, part of the 50S ribosomal subunit. Zn(2+) is required as a cofactor.

Functionally, binds the 23S rRNA. The chain is Large ribosomal subunit protein bL31 from Nitrosospira multiformis (strain ATCC 25196 / NCIMB 11849 / C 71).